Here is a 454-residue protein sequence, read N- to C-terminus: tRNA modification GTPase MnmE (454 aa).

(6S)-5-formyl-5,6,7,8-tetrahydrofolate-binding residues include R23, E80, and K120. In terms of domain architecture, TrmE-type G spans 216–377 (GMKVVIAGRP…LRDHLKQSMG (162 aa)). K(+) is bound at residue N226. Residues 226–231 (NAGKSS), 245–251 (TDIAGTT), 270–273 (DTAG), 335–338 (NKAD), and 358–360 (SAR) contribute to the GTP site. S230 contributes to the Mg(2+) binding site. K(+)-binding residues include T245, I247, and T250. Position 251 (T251) interacts with Mg(2+). K454 provides a ligand contact to (6S)-5-formyl-5,6,7,8-tetrahydrofolate.

Belongs to the TRAFAC class TrmE-Era-EngA-EngB-Septin-like GTPase superfamily. TrmE GTPase family. In terms of assembly, homodimer. Heterotetramer of two MnmE and two MnmG subunits. K(+) serves as cofactor.

The protein resides in the cytoplasm. In terms of biological role, exhibits a very high intrinsic GTPase hydrolysis rate. Involved in the addition of a carboxymethylaminomethyl (cmnm) group at the wobble position (U34) of certain tRNAs, forming tRNA-cmnm(5)s(2)U34. This is tRNA modification GTPase MnmE from Yersinia pestis.